A 949-amino-acid chain; its full sequence is Protocadherin alpha-11 (949 aa).

The N-terminal stretch at 1-29 (MFGFQRRGLGTPRLQLWLLLLEFWEVGSG) is a signal peptide. 6 Cadherin domains span residues 30–133 (QLHY…PPVF), 157–242 (ASDA…DPEF), 243–349 (DKSE…SPEV), 350–454 (AVTS…APAF), 455–564 (AQPE…APAL), and 580–677 (VPRS…APKA). Topologically, residues 30 to 696 (QLHYSVSEEA…SPEAALVDVN (667 aa)) are extracellular. Residues N265 and N304 are each glycosylated (N-linked (GlcNAc...) asparagine). The N-linked (GlcNAc...) asparagine glycan is linked to N547. The helical transmembrane segment at 697–717 (VYLIIAICVVSSLLVLTLLLY) threads the bilayer. Over 718–949 (TALWWSATPT…GNSTTDNSDQ (232 aa)) the chain is Cytoplasmic. PXXP repeat units follow at residues 733 to 736 (PGKP) and 773 to 776 (PSLP). Residues 733 to 893 (PGKPTLVCSR…PDKFIIPGSP (161 aa)) are 6 X 4 AA repeats of P-X-X-P. Disordered stretches follow at residues 753–807 (RRQR…DWRY) and 826–949 (ILRA…NSDQ). Residues 780–789 (NKEEEGERQE) show a composition bias toward basic and acidic residues. PXXP repeat units follow at residues 795–798 (PGQP), 831–834 (PGGP), 872–875 (PGNP), and 890–893 (PGSP). The span at 908–922 (DKSDFITFGKKEETK) shows a compositional bias: basic and acidic residues.

The protein localises to the cell membrane. In terms of biological role, potential calcium-dependent cell-adhesion protein. May be involved in the establishment and maintenance of specific neuronal connections in the brain. The sequence is that of Protocadherin alpha-11 (PCDHA11) from Homo sapiens (Human).